A 233-amino-acid chain; its full sequence is Adenosine 5'-phosphosulfate reductase (233 aa).

[4Fe-4S] cluster-binding residues include Cys120, Cys121, Cys203, and Cys206. Residue Cys229 is the Nucleophile; cysteine thiosulfonate intermediate of the active site.

Belongs to the PAPS reductase family. CysH subfamily. [4Fe-4S] cluster serves as cofactor.

The protein localises to the cytoplasm. The catalysed reaction is [thioredoxin]-disulfide + sulfite + AMP + 2 H(+) = adenosine 5'-phosphosulfate + [thioredoxin]-dithiol. It participates in sulfur metabolism; hydrogen sulfide biosynthesis; sulfite from sulfate. In terms of biological role, catalyzes the formation of sulfite from adenosine 5'-phosphosulfate (APS) using thioredoxin as an electron donor. This Bacillus pumilus (strain SAFR-032) protein is Adenosine 5'-phosphosulfate reductase.